Consider the following 89-residue polypeptide: Small ribosomal subunit protein uS14A (89 aa).

This sequence belongs to the universal ribosomal protein uS14 family. Part of the 30S ribosomal subunit. Contacts proteins S3 and S10.

Functionally, binds 16S rRNA, required for the assembly of 30S particles and may also be responsible for determining the conformation of the 16S rRNA at the A site. This Staphylococcus haemolyticus (strain JCSC1435) protein is Small ribosomal subunit protein uS14A.